The primary structure comprises 156 residues: SsrA-binding protein (156 aa).

Positions Arg-134–Arg-156 are disordered.

This sequence belongs to the SmpB family.

The protein localises to the cytoplasm. Functionally, required for rescue of stalled ribosomes mediated by trans-translation. Binds to transfer-messenger RNA (tmRNA), required for stable association of tmRNA with ribosomes. tmRNA and SmpB together mimic tRNA shape, replacing the anticodon stem-loop with SmpB. tmRNA is encoded by the ssrA gene; the 2 termini fold to resemble tRNA(Ala) and it encodes a 'tag peptide', a short internal open reading frame. During trans-translation Ala-aminoacylated tmRNA acts like a tRNA, entering the A-site of stalled ribosomes, displacing the stalled mRNA. The ribosome then switches to translate the ORF on the tmRNA; the nascent peptide is terminated with the 'tag peptide' encoded by the tmRNA and targeted for degradation. The ribosome is freed to recommence translation, which seems to be the essential function of trans-translation. This is SsrA-binding protein from Paenarthrobacter aurescens (strain TC1).